The primary structure comprises 308 residues: Ribonuclease HIII (308 aa).

The region spanning 91-308 is the RNase H type-2 domain; that stretch reads KNVIGSDEVG…TEKALKMVKK (218 aa). Residues aspartate 97, glutamate 98, and aspartate 202 each contribute to the a divalent metal cation site.

This sequence belongs to the RNase HII family. RnhC subfamily. Mn(2+) is required as a cofactor. It depends on Mg(2+) as a cofactor.

The protein resides in the cytoplasm. The catalysed reaction is Endonucleolytic cleavage to 5'-phosphomonoester.. Its function is as follows. Endonuclease that specifically degrades the RNA of RNA-DNA hybrids. The chain is Ribonuclease HIII from Listeria monocytogenes serotype 4b (strain CLIP80459).